Reading from the N-terminus, the 203-residue chain is Ribonuclease HII (203 aa).

One can recognise an RNase H type-2 domain in the interval 18–203 (GQYAGVDEVG…SFRPVREALA (186 aa)). 3 residues coordinate a divalent metal cation: aspartate 24, glutamate 25, and aspartate 116.

Belongs to the RNase HII family. Mn(2+) is required as a cofactor. Requires Mg(2+) as cofactor.

The protein localises to the cytoplasm. The catalysed reaction is Endonucleolytic cleavage to 5'-phosphomonoester.. Functionally, endonuclease that specifically degrades the RNA of RNA-DNA hybrids. The sequence is that of Ribonuclease HII from Shewanella pealeana (strain ATCC 700345 / ANG-SQ1).